The primary structure comprises 460 residues: uncharacterized protein (460 aa).

The TRAM domain occupies 9–67 (NFKKNDIFEAEVLDLTHEGQGVVKIDSFPFFVDNALPGERIKMHVLKVGKSFGFGRVDE). The S-adenosyl-L-methionine site is built by Gln292, Tyr321, Glu342, and Asp390. The active-site Nucleophile is the Cys417.

It belongs to the class I-like SAM-binding methyltransferase superfamily. RNA M5U methyltransferase family.

This is an uncharacterized protein from Lactococcus lactis subsp. lactis (strain IL1403) (Streptococcus lactis).